The following is a 59-amino-acid chain: UPF0391 membrane protein lpg2521 (59 aa).

2 helical membrane passes run 5-25 (ALIF…GIAV) and 30-50 (IAKI…IMGL).

Belongs to the UPF0391 family.

It localises to the cell membrane. In Legionella pneumophila subsp. pneumophila (strain Philadelphia 1 / ATCC 33152 / DSM 7513), this protein is UPF0391 membrane protein lpg2521.